The primary structure comprises 608 residues: Chaperone protein HtpG (608 aa).

Residues 1 to 332 (MQFQTEVNQL…VEDLPLNVSR (332 aa)) are a; substrate-binding. The b stretch occupies residues 333-536 (EILQENQILK…KNKPDFAMQQ (204 aa)). The tract at residues 537–608 (LLKQMGQEQN…LTKIINKAFS (72 aa)) is c.

The protein belongs to the heat shock protein 90 family. Homodimer.

The protein localises to the cytoplasm. In terms of biological role, molecular chaperone. Has ATPase activity. The polypeptide is Chaperone protein HtpG (Campylobacter jejuni (strain RM1221)).